The primary structure comprises 572 residues: Urease subunit alpha (572 aa).

The region spanning 131-572 is the Urease domain; sequence GGIDAHIHFI…LPLAQRYFLF (442 aa). 3 residues coordinate Ni(2+): His136, His138, and Lys219. An N6-carboxylysine modification is found at Lys219. Substrate is bound at residue His221. Ni(2+) contacts are provided by His248 and His274. His322 serves as the catalytic Proton donor. Asp362 lines the Ni(2+) pocket.

It belongs to the metallo-dependent hydrolases superfamily. Urease alpha subunit family. As to quaternary structure, heterotrimer of UreA (gamma), UreB (beta) and UreC (alpha) subunits. Three heterotrimers associate to form the active enzyme. Ni cation serves as cofactor. Post-translationally, carboxylation allows a single lysine to coordinate two nickel ions.

It is found in the cytoplasm. The catalysed reaction is urea + 2 H2O + H(+) = hydrogencarbonate + 2 NH4(+). The protein operates within nitrogen metabolism; urea degradation; CO(2) and NH(3) from urea (urease route): step 1/1. The sequence is that of Urease subunit alpha from Thermosynechococcus vestitus (strain NIES-2133 / IAM M-273 / BP-1).